Consider the following 245-residue polypeptide: MKIDYLTLFPEMFEGVLNHSILKRAQDKGIINVNTINFRDYSINKHNQVDDYPFGGGQGMVLKPEPVFNAMEDINHNEHTRVILMCPQGRPFTQEIAQELSEAKHIVFICGHYEGYDERIRKHLVTDEISMGDYVLTGGELPAMTMTDAIVRLIPGVLGNQASHQDDSFSDGLLEFPQYTRPREYKNMSVPEVLLSGNHAHIDQWRHEQKLIRTYEKRPDLLEQYPLTEKDREILETYKKKLKND.

Residues glycine 111 and methionine 131–leucine 136 contribute to the S-adenosyl-L-methionine site.

The protein belongs to the RNA methyltransferase TrmD family. In terms of assembly, homodimer.

It localises to the cytoplasm. The catalysed reaction is guanosine(37) in tRNA + S-adenosyl-L-methionine = N(1)-methylguanosine(37) in tRNA + S-adenosyl-L-homocysteine + H(+). Functionally, specifically methylates guanosine-37 in various tRNAs. This Staphylococcus epidermidis (strain ATCC 12228 / FDA PCI 1200) protein is tRNA (guanine-N(1)-)-methyltransferase.